A 256-amino-acid polypeptide reads, in one-letter code: 5'-nucleotidase SurE (256 aa).

D13, D14, S44, and N101 together coordinate a divalent metal cation.

Belongs to the SurE nucleotidase family. It depends on a divalent metal cation as a cofactor.

It is found in the cytoplasm. The enzyme catalyses a ribonucleoside 5'-phosphate + H2O = a ribonucleoside + phosphate. In terms of biological role, nucleotidase that shows phosphatase activity on nucleoside 5'-monophosphates. The sequence is that of 5'-nucleotidase SurE from Porphyromonas gingivalis (strain ATCC 33277 / DSM 20709 / CIP 103683 / JCM 12257 / NCTC 11834 / 2561).